A 499-amino-acid chain; its full sequence is Probable cytosol aminopeptidase (499 aa).

Residues K267 and D272 each contribute to the Mn(2+) site. Residue K279 is part of the active site. Residues D290, D349, and E351 each coordinate Mn(2+). R353 is an active-site residue.

This sequence belongs to the peptidase M17 family. The cofactor is Mn(2+).

The protein localises to the cytoplasm. The enzyme catalyses Release of an N-terminal amino acid, Xaa-|-Yaa-, in which Xaa is preferably Leu, but may be other amino acids including Pro although not Arg or Lys, and Yaa may be Pro. Amino acid amides and methyl esters are also readily hydrolyzed, but rates on arylamides are exceedingly low.. It catalyses the reaction Release of an N-terminal amino acid, preferentially leucine, but not glutamic or aspartic acids.. Functionally, presumably involved in the processing and regular turnover of intracellular proteins. Catalyzes the removal of unsubstituted N-terminal amino acids from various peptides. The sequence is that of Probable cytosol aminopeptidase from Alkaliphilus oremlandii (strain OhILAs) (Clostridium oremlandii (strain OhILAs)).